Consider the following 350-residue polypeptide: Inositol 2-dehydrogenase/D-chiro-inositol 3-dehydrogenase (350 aa).

It belongs to the Gfo/Idh/MocA family. As to quaternary structure, homotetramer.

It carries out the reaction myo-inositol + NAD(+) = scyllo-inosose + NADH + H(+). The catalysed reaction is 1D-chiro-inositol + NAD(+) = scyllo-inosine + NADH + H(+). Its pathway is polyol metabolism; myo-inositol degradation into acetyl-CoA; acetyl-CoA from myo-inositol: step 1/7. In terms of biological role, involved in the oxidation of myo-inositol (MI) and D-chiro-inositol (DCI) to 2-keto-myo-inositol (2KMI or 2-inosose) and 1-keto-D-chiro-inositol (1KDCI), respectively. The polypeptide is Inositol 2-dehydrogenase/D-chiro-inositol 3-dehydrogenase (Lactiplantibacillus plantarum (strain ATCC BAA-793 / NCIMB 8826 / WCFS1) (Lactobacillus plantarum)).